We begin with the raw amino-acid sequence, 241 residues long: Beta-nerve growth factor (241 aa).

Positions 1–18 (MSMLFYTLITVFLIGIQA) are cleaved as a signal peptide. A propeptide spanning residues 19-121 (EPYSDSNVLS…SVNRTHRSKR (103 aa)) is cleaved from the precursor. Residues Asn69 and Asn114 are each glycosylated (N-linked (GlcNAc...) asparagine). 3 disulfide bridges follow: Cys136/Cys201, Cys179/Cys229, and Cys189/Cys231.

The protein belongs to the NGF-beta family. In terms of assembly, homodimer. The homodimer interacts with a single NTRK1 chain. The homodimer interacts with a single NGFR chain. The NGF dimer interacts with a single SORCS2 chain (via extracellular domain). The NGF precursor (proNGF) binds to a receptor complex formed by SORT1 and NGFR, which leads to NGF endocytosis. Both mature NGF and the immature NGF precursor (proNGF) interact with SORCS2 and with the heterodimer formed by SORCS2 and NGFR (via extracellular domains). The NGF precursor (proNGF) has much higher affinity for SORCS2 than mature NGF. The NGF precursor (proNGF) has much higher affinity for SORT1 than mature NGF. Interacts with ADAM10 in a divalent cation-dependent manner. Interacts with SORCS3.

The protein resides in the secreted. Its subcellular location is the endosome lumen. Functionally, nerve growth factor is important for the development and maintenance of the sympathetic and sensory nervous systems. Extracellular ligand for the NTRK1 and NGFR receptors, activates cellular signaling cascades through those receptor tyrosine kinase to regulate neuronal proliferation, differentiation and survival. Inhibits metalloproteinase dependent proteolysis of platelet glycoprotein VI. The sequence is that of Beta-nerve growth factor (NGF) from Cavia porcellus (Guinea pig).